Reading from the N-terminus, the 524-residue chain is Importin subunit alpha-1 (524 aa).

Residues 1-42 (MGDEFRPSHEERSKMYKSNVRDQNEMRRKRREDEVQIRKNRR) are disordered. One can recognise an IBB domain in the interval 1 to 59 (MGDEFRPSHEERSKMYKSNVRDQNEMRRKRREDEVQIRKNRRDEKFERNRQITVQRSLS).

Belongs to the importin alpha family. As to quaternary structure, forms a complex with an importin beta subunit. Adult germline tissues.

Its subcellular location is the cytoplasm. Its function is as follows. Binds specifically and directly to substrates containing either a simple or bipartite NLS motif. Promotes docking of import substrates to the nuclear envelope. Seems to act as a cytosolic receptor for both simple and bipartite NLS motifs. The chain is Importin subunit alpha-1 (ima-1) from Caenorhabditis elegans.